A 378-amino-acid chain; its full sequence is Ribosomal RNA large subunit methyltransferase G (378 aa).

This sequence belongs to the methyltransferase superfamily. RlmG family.

Its subcellular location is the cytoplasm. It catalyses the reaction guanosine(1835) in 23S rRNA + S-adenosyl-L-methionine = N(2)-methylguanosine(1835) in 23S rRNA + S-adenosyl-L-homocysteine + H(+). In terms of biological role, specifically methylates the guanine in position 1835 (m2G1835) of 23S rRNA. The protein is Ribosomal RNA large subunit methyltransferase G of Salmonella paratyphi A (strain ATCC 9150 / SARB42).